Here is a 232-residue protein sequence, read N- to C-terminus: Large ribosomal subunit protein uL1 (232 aa).

It belongs to the universal ribosomal protein uL1 family. As to quaternary structure, part of the 50S ribosomal subunit.

Binds directly to 23S rRNA. The L1 stalk is quite mobile in the ribosome, and is involved in E site tRNA release. Functionally, protein L1 is also a translational repressor protein, it controls the translation of the L11 operon by binding to its mRNA. In Maricaulis maris (strain MCS10) (Caulobacter maris), this protein is Large ribosomal subunit protein uL1.